Consider the following 394-residue polypeptide: NAD(P)H-quinone oxidoreductase subunit H (394 aa).

This sequence belongs to the complex I 49 kDa subunit family. As to quaternary structure, NDH-1 can be composed of about 15 different subunits; different subcomplexes with different compositions have been identified which probably have different functions.

The protein localises to the cellular thylakoid membrane. It catalyses the reaction a plastoquinone + NADH + (n+1) H(+)(in) = a plastoquinol + NAD(+) + n H(+)(out). The catalysed reaction is a plastoquinone + NADPH + (n+1) H(+)(in) = a plastoquinol + NADP(+) + n H(+)(out). Functionally, NDH-1 shuttles electrons from an unknown electron donor, via FMN and iron-sulfur (Fe-S) centers, to quinones in the respiratory and/or the photosynthetic chain. The immediate electron acceptor for the enzyme in this species is believed to be plastoquinone. Couples the redox reaction to proton translocation, and thus conserves the redox energy in a proton gradient. Cyanobacterial NDH-1 also plays a role in inorganic carbon-concentration. The chain is NAD(P)H-quinone oxidoreductase subunit H from Acaryochloris marina (strain MBIC 11017).